The chain runs to 135 residues: UPF0102 protein Mjls_1965 (135 aa).

Belongs to the UPF0102 family.

The sequence is that of UPF0102 protein Mjls_1965 from Mycobacterium sp. (strain JLS).